The primary structure comprises 74 residues: Pelophylaxin-2 (74 aa).

The N-terminal stretch at 1–22 (MFTMKKSLLFFFFLGTIALSLC) is a signal peptide. A propeptide spanning residues 23–42 (EEERGADEEENGAEITDEEV) is cleaved from the precursor. A disulfide bridge connects residues Cys68 and Cys74.

In terms of tissue distribution, expressed by the skin glands.

Its subcellular location is the secreted. Antimicrobial peptide. This chain is Pelophylaxin-2, found in Pelophylax fukienensis (Fukien gold-striped pond frog).